Reading from the N-terminus, the 328-residue chain is MIFSILEHILTHISFSVVSIVLTIYFLTFLVNLDEIIGFFDSSDKGIVITFFGITGLLFTRWIYSGHFPLSNLYESLIFLSWAFSIIHMISYFNKKQKNHLNAITAPSAIFIQGFATSGLLNKIPESAILVPALQSQWLMMHVSMMILGYGALLCGSLLSIALLVITFRKTGPTFWNKNIKKNNLLTEFFYFDVLYYINERNSILLQQNSNFSFSRNYYRYQLIEQLDYWSFRIISLGFIFLTVGILSGAVWANETWGSYWNWDPKETWAFITWTIFAIFLHIKTNRNVRGINSAIVASTGFLLIWICYFGVNLLGIGLHSYGSFTSN.

The next 8 membrane-spanning stretches (helical) occupy residues 13–33 (ISFS…LVNL), 46–66 (GIVI…IYSG), 73–93 (LYES…ISYF), 101–121 (LNAI…SGLL), 146–166 (MILG…LLVI), 234–254 (IISL…VWAN), 263–283 (WDPK…FLHI), and 295–315 (AIVA…VNLL).

It belongs to the CcmF/CycK/Ccl1/NrfE/CcsA family. In terms of assembly, may interact with Ccs1.

It localises to the plastid. Its subcellular location is the chloroplast thylakoid membrane. Required during biogenesis of c-type cytochromes (cytochrome c6 and cytochrome f) at the step of heme attachment. This chain is Cytochrome c biogenesis protein CcsA, found in Arabis hirsuta (Hairy rock-cress).